The chain runs to 95 residues: MSYTIQAQTRTEIGKGSSRRLRHAGKVPAVIYGQGKEPVSIVFDHKDIINIQANADFYTSTLTIVVDGKEVGVRAQAMQRHVFKPLIEHVDFVYA.

Belongs to the bacterial ribosomal protein bL25 family. As to quaternary structure, part of the 50S ribosomal subunit; part of the 5S rRNA/L5/L18/L25 subcomplex. Contacts the 5S rRNA. Binds to the 5S rRNA independently of L5 and L18.

This is one of the proteins that binds to the 5S RNA in the ribosome where it forms part of the central protuberance. The polypeptide is Large ribosomal subunit protein bL25 (Shewanella baltica (strain OS223)).